The following is a 634-amino-acid chain: Growth hormone receptor (634 aa).

The signal sequence occupies residues 1–18 (MDLWQLLLTLAVAGSSDA). At 19–260 (FSGSEATPAF…NPSACEEDFQ (242 aa)) the chain is on the extracellular side. N-linked (GlcNAc...) asparagine glycosylation occurs at asparagine 46. Cysteine 56 and cysteine 66 are oxidised to a cystine. Asparagine 73 is a glycosylation site (N-linked (GlcNAc...) asparagine). An intrachain disulfide couples cysteine 97 to cysteine 108. The N-linked (GlcNAc...) asparagine glycan is linked to asparagine 111. A disulfide bridge links cysteine 122 with cysteine 136. The Fibronectin type-III domain maps to 147-250 (PPVGLNWTLL…EVLLITFPQM (104 aa)). N-linked (GlcNAc...) asparagine glycans are attached at residues asparagine 152, asparagine 157, and asparagine 196. The WSXWS motif motif lies at 236–240 (YGKFS). The helical transmembrane segment at 261-284 (FPWFLIIIFGILGLTVTLFLLIFS) threads the bilayer. At 285–634 (KQQRIKMLIL…STDQLNKIMP (350 aa)) the chain is on the cytoplasmic side. Residues 290–375 (KMLILPPVPV…HEKSLSIFGA (86 aa)) are required for JAK2 binding. A Box 1 motif motif is present at residues 293–301 (ILPPVPVPK). The UbE motif signature appears at 336–345 (DSWVEFIELD). Position 337 is a phosphoserine (serine 337). Residues 451-471 (KPRPLPIGGTESTHQAVHTQL) are disordered. Residues 460-471 (TESTHQAVHTQL) are compositionally biased toward polar residues. Phosphotyrosine is present on residues tyrosine 483 and tyrosine 591.

The protein belongs to the type I cytokine receptor family. Type 1 subfamily. As to quaternary structure, on growth hormone (GH) binding, forms homodimers and binds JAK2 via a box 1-containing domain. Post-translationally, the soluble form (GHBP) is produced by phorbol ester-promoted proteolytic cleavage at the cell surface (shedding) by ADAM17/TACE. Shedding is inhibited by growth hormone (GH) binding to the receptor probably due to a conformational change in GHR rendering the receptor inaccessible to ADAM17. On GH binding, phosphorylated on tyrosine residues in the cytoplasmic domain by JAK2. In terms of processing, ubiquitinated by the ECS(SOCS2) complex following ligand-binding and phosphorylation by JAK2, leading to its degradation by the proteasome. Regulation by the ECS(SOCS2) complex acts as a negative feedback loop of growth hormone receptor signaling. Ubiquitination is not sufficient for GHR internalization.

It localises to the cell membrane. The protein localises to the secreted. Functionally, receptor for pituitary gland growth hormone (GH1) involved in regulating postnatal body growth. On ligand binding, couples to the JAK2/STAT5 pathway. The soluble form (GHBP) acts as a reservoir of growth hormone in plasma and may be a modulator/inhibitor of GH signaling. The sequence is that of Growth hormone receptor (GHR) from Ovis aries (Sheep).